Consider the following 199-residue polypeptide: Glycerol-3-phosphate acyltransferase (199 aa).

The next 5 helical transmembrane spans lie at 5-25 (VLTIVIIVGAYLAGSVSSAVL), 56-76 (SAALVLFCDMLKGAAPAYLAF), 83-103 (IALGVIAIAACLGHIFPIFFG), 118-138 (APIGHDLALCLLASWIVLVLV), and 141-161 (YSSFAAICTALLAPVYTWWLD).

The protein belongs to the PlsY family. In terms of assembly, probably interacts with PlsX.

It is found in the cell inner membrane. It carries out the reaction an acyl phosphate + sn-glycerol 3-phosphate = a 1-acyl-sn-glycero-3-phosphate + phosphate. It functions in the pathway lipid metabolism; phospholipid metabolism. Its function is as follows. Catalyzes the transfer of an acyl group from acyl-phosphate (acyl-PO(4)) to glycerol-3-phosphate (G3P) to form lysophosphatidic acid (LPA). This enzyme utilizes acyl-phosphate as fatty acyl donor, but not acyl-CoA or acyl-ACP. This chain is Glycerol-3-phosphate acyltransferase, found in Shewanella halifaxensis (strain HAW-EB4).